Here is a 489-residue protein sequence, read N- to C-terminus: MTFRHCVAVDLGASSGRVMLARYDSKHRTLTLREIHRFVNCLQKTDGFDTWDIDSLEKDIRLGLKKVCNEGILIDSISIDTWGVDYVLLDKQGQRVGLPVSYRDNRTTGIMPQALVQIGKSEIYRRSGIQFLPFNTIYQLHALTKQQPELTAQVAHALLMPDYFSYRLTGEMNWEYTNATTTQLVNINTDDWDDTLLAWTGAKKSWFGRPSHPGNVIGDWICPQGNRIPVVAVASHDTASAVIASPLANKHSAYLSSGTWSLMGFESKKPYTTDEALAANITNEGGAEGRYRVLKNIMGLWLLQRVLKERRITDLPALIAQTEALPACRFLINPNDDRFINPDDMRAEIQAACRETDQPVPVSDAELARCIFDSLALLYADILHELANLRGEKFTQLHIVGGGCQNALLNQLCADACGIRVMAGPVEASTLGNIGIQLMTLDELNNVDDFRQVVSANYDLTTYIPNPDSEIARHVAQFQPKRQTKELCA.

Position 13–17 (13–17 (ASSGR)) interacts with ATP. Cys-68 and Cys-222 are joined by a disulfide. Substrate is bound by residues Gly-83 and 236-238 (HDT). Catalysis depends on Asp-237, which acts as the Proton acceptor. Thr-259 contributes to the ATP binding site. Asn-296 serves as a coordination point for substrate. Gln-304 provides a ligand contact to ATP. A disulfide bond links Cys-353 and Cys-370. Residue Gly-402 coordinates ATP. Residues Cys-413 and Cys-417 are joined by a disulfide bond.

The protein belongs to the rhamnulokinase family. It depends on Mg(2+) as a cofactor.

It carries out the reaction L-rhamnulose + ATP = L-rhamnulose 1-phosphate + ADP + H(+). It participates in carbohydrate degradation; L-rhamnose degradation; glycerone phosphate from L-rhamnose: step 2/3. Involved in the catabolism of L-rhamnose (6-deoxy-L-mannose). Catalyzes the transfer of the gamma-phosphate group from ATP to the 1-hydroxyl group of L-rhamnulose to yield L-rhamnulose 1-phosphate. This Salmonella dublin (strain CT_02021853) protein is Rhamnulokinase.